An 804-amino-acid chain; its full sequence is E3 ubiquitin-protein ligase RNF10 (804 aa).

Composition is skewed to low complexity over residues 1 to 31 (MPQSSPSAAATASDMDKNSGSNSSSASSGSS), 78 to 90 (SNQSRRSNSQKSK), and 104 to 113 (SKPFSSSSNG). Residues 1-134 (MPQSSPSAAA…AEFSPAQFSG (134 aa)) form a disordered region. Residue Ser-5 is modified to Phosphoserine. At Ser-110 the chain carries Phosphoserine. The span at 114 to 124 (GRRDEVAEAQR) shows a compositional bias: basic and acidic residues. Ser-128 carries the post-translational modification Phosphoserine. An RING-type zinc finger spans residues 225–267 (CPICLYPPTAAKITRCGHIFCWACILHYLSLSEKTWSKCPICY). 3 disordered regions span residues 589–611 (DIEKRKRQRQKKAREERRRERRI), 646–665 (DSALGPTSTEGHGALSLSPL), and 715–804 (KADG…VHTK). Basic and acidic residues predominate over residues 601–611 (AREERRRERRI). Positions 646-655 (DSALGPTSTE) are enriched in polar residues. Residues 715 to 729 (KADGWPKTAPKKDDN) are compositionally biased toward basic and acidic residues. Positions 795-804 (LFSTSVVHTK) are enriched in polar residues.

The protein belongs to the RNF10 family. As to quaternary structure, interacts with MEOX2.

Its subcellular location is the cytoplasm. It is found in the nucleus. It carries out the reaction S-ubiquitinyl-[E2 ubiquitin-conjugating enzyme]-L-cysteine + [acceptor protein]-L-lysine = [E2 ubiquitin-conjugating enzyme]-L-cysteine + N(6)-ubiquitinyl-[acceptor protein]-L-lysine.. The protein operates within protein modification; protein ubiquitination. Its function is as follows. E3 ubiquitin-protein ligase that catalyzes monoubiquitination of 40S ribosomal proteins RPS2/us5 and RPS3/us3 in response to ribosome stalling. Part of a ribosome quality control that takes place when ribosomes have stalled during translation initiation (iRQC): RNF10 acts by mediating monoubiquitination of RPS2/us5 and RPS3/us3, promoting their degradation by the proteasome. Also promotes ubiquitination of 40S ribosomal proteins in response to ribosome stalling during translation elongation. The action of RNF10 in iRQC is counteracted by USP10. May also act as a transcriptional factor involved in the regulation of MAG (Myelin-associated glycoprotein) expression. Acts as a regulator of Schwann cell differentiation and myelination. In Mus musculus (Mouse), this protein is E3 ubiquitin-protein ligase RNF10.